Here is a 391-residue protein sequence, read N- to C-terminus: Elongation factor Tu 1 (391 aa).

The 192-residue stretch at 10–201 folds into the tr-type G domain; the sequence is KPHVNIGTIG…EVDNYIPTPE (192 aa). Positions 19-26 are G1; it reads GHVDHGKT. 19 to 26 serves as a coordination point for GTP; sequence GHVDHGKT. Thr-26 lines the Mg(2+) pocket. A G2 region spans residues 55 to 59; it reads GITIS. A G3 region spans residues 76-79; that stretch reads DCPG. GTP-binding positions include 76–80 and 131–134; these read DCPGH and NKVD. The segment at 131 to 134 is G4; it reads NKVD. Residues 169–171 are G5; the sequence is SAL.

It belongs to the TRAFAC class translation factor GTPase superfamily. Classic translation factor GTPase family. EF-Tu/EF-1A subfamily. In terms of assembly, monomer.

It localises to the cytoplasm. The catalysed reaction is GTP + H2O = GDP + phosphate + H(+). GTP hydrolase that promotes the GTP-dependent binding of aminoacyl-tRNA to the A-site of ribosomes during protein biosynthesis. In Bartonella quintana (strain Toulouse) (Rochalimaea quintana), this protein is Elongation factor Tu 1.